The primary structure comprises 396 residues: Acetate kinase (396 aa).

Position 8 (asparagine 8) interacts with Mg(2+). Position 15 (lysine 15) interacts with ATP. Position 89 (arginine 89) interacts with substrate. The Proton donor/acceptor role is filled by aspartate 146. Residues histidine 206–glycine 210, aspartate 283–arginine 285, and glycine 331–asparagine 335 each bind ATP. Position 383 (glutamate 383) interacts with Mg(2+).

It belongs to the acetokinase family. As to quaternary structure, homodimer. Mg(2+) is required as a cofactor. Mn(2+) serves as cofactor.

The protein resides in the cytoplasm. The enzyme catalyses acetate + ATP = acetyl phosphate + ADP. It participates in metabolic intermediate biosynthesis; acetyl-CoA biosynthesis; acetyl-CoA from acetate: step 1/2. Catalyzes the formation of acetyl phosphate from acetate and ATP. Can also catalyze the reverse reaction. This is Acetate kinase from Streptococcus pneumoniae serotype 2 (strain D39 / NCTC 7466).